The following is a 155-amino-acid chain: Cytochrome c oxidase subunit 4, mitochondrial (155 aa).

Residues 1-25 constitute a mitochondrion transit peptide; it reads MLSLRQSIRFFKPATRTLCSSRYLL. Position 55 is a phosphothreonine (T55). Zn(2+) is bound by residues C111, H119, C134, and C137.

The protein belongs to the cytochrome c oxidase subunit 5B family. In terms of assembly, component of the cytochrome c oxidase (complex IV, CIV), a multisubunit enzyme composed of 12 subunits. The complex is composed of a catalytic core of 3 subunits COX1, COX2 and COX3, encoded in the mitochondrial DNA, and 9 supernumerary subunits COX4, COX5A (or COX5B), COX6, COX7, COX8, COX9, COX12, COX13 and COX26, which are encoded in the nuclear genome. The complex exists as a monomer or a dimer and forms supercomplexes (SCs) in the inner mitochondrial membrane with a dimer of ubiquinol-cytochrome c oxidoreductase (cytochrome b-c1 complex, complex III, CIII), resulting in 2 different assemblies (supercomplexes III(2)IV and III(2)IV(2)).

The protein resides in the mitochondrion inner membrane. The protein operates within energy metabolism; oxidative phosphorylation. Its function is as follows. Component of the cytochrome c oxidase, the last enzyme in the mitochondrial electron transport chain which drives oxidative phosphorylation. The respiratory chain contains 3 multisubunit complexes succinate dehydrogenase (complex II, CII), ubiquinol-cytochrome c oxidoreductase (cytochrome b-c1 complex, complex III, CIII) and cytochrome c oxidase (complex IV, CIV), that cooperate to transfer electrons derived from NADH and succinate to molecular oxygen, creating an electrochemical gradient over the inner membrane that drives transmembrane transport and the ATP synthase. Cytochrome c oxidase is the component of the respiratory chain that catalyzes the reduction of oxygen to water. Electrons originating from reduced cytochrome c in the intermembrane space (IMS) are transferred via the dinuclear copper A center (CU(A)) of COX2 and heme A of COX1 to the active site in COX1, a binuclear center (BNC) formed by heme A3 and copper B (CU(B)). The BNC reduces molecular oxygen to 2 water molecules using 4 electrons from cytochrome c in the IMS and 4 protons from the mitochondrial matrix. This is Cytochrome c oxidase subunit 4, mitochondrial (COX4) from Saccharomyces cerevisiae (strain ATCC 204508 / S288c) (Baker's yeast).